We begin with the raw amino-acid sequence, 211 residues long: Troponin I, cardiac muscle (211 aa).

A disordered region spans residues 1-23; sequence MADESGDAAGCPPPAPAPIRRQS. Position 2 is an N-acetylalanine (alanine 2). Serine 5 carries the phosphoserine modification. Phosphoserine; by PKA and PKD/PRKD1 occurs at positions 23 and 24. Position 27 is a phosphotyrosine (tyrosine 27). Threonine 32 is subject to Phosphothreonine; by STK4/MST1. Residues 33–80 are involved in binding TNC; it reads EPHAKKKSKISASRKLQLKTLMLQIAKQELEREAEERRGEKGRALSTR. Serine 43 and serine 45 each carry phosphoserine; by PKC/PRKCE. Threonine 52 bears the Phosphothreonine; by STK4/MST1 mark. At serine 78 the chain carries Phosphoserine. Threonine 79 carries the post-translational modification Phosphothreonine. Phosphothreonine; by STK4/MST1 occurs at positions 130 and 144. An involved in binding TNC and actin region spans residues 130-150; that stretch reads TQKIFDLRGKFKRPTLRRVRI. The residue at position 151 (serine 151) is a Phosphoserine; by PAK3. Phosphoserine is present on serine 167. Phosphothreonine is present on threonine 182. A Phosphoserine modification is found at serine 200.

It belongs to the troponin I family. In terms of assembly, binds to actin and tropomyosin. Interacts with TRIM63. Interacts with STK4/MST1. In terms of processing, phosphorylated at Ser-23 and Ser-24 by PRKD1; phosphorylation reduces myofilament calcium sensitivity. Phosphorylated preferentially at Thr-32. Phosphorylation by STK4/MST1 alters its binding affinity to TNNC1 (cardiac Tn-C) and TNNT2 (cardiac Tn-T). Phosphorylated at Ser-43 and Ser-45 by PRKCE; phosphorylation increases myocardium contractile dysfunction.

Troponin I is the inhibitory subunit of troponin, the thin filament regulatory complex which confers calcium-sensitivity to striated muscle actomyosin ATPase activity. In Canis lupus familiaris (Dog), this protein is Troponin I, cardiac muscle (TNNI3).